The following is a 1479-amino-acid chain: Chromosome partition protein MukB (1479 aa).

ATP is bound at residue 34-41 (GGNGAGKS). Coiled coils occupy residues 337 to 418 (LNLV…QYQQ), 511 to 603 (QAER…RAPV), 780 to 810 (RAAR…DVQK), 847 to 1116 (ELDR…AKAG), and 1206 to 1265 (DDPV…LQAV). The flexible hinge stretch occupies residues 666-783 (PGGSEDPRLN…EVPLFGRAAR (118 aa)).

The protein belongs to the SMC family. MukB subfamily. Homodimerization via its hinge domain. Binds to DNA via its C-terminal region. Interacts, and probably forms a ternary complex, with MukE and MukF via its C-terminal region. The complex formation is stimulated by calcium or magnesium. Interacts with tubulin-related protein FtsZ.

The protein localises to the cytoplasm. It is found in the nucleoid. In terms of biological role, plays a central role in chromosome condensation, segregation and cell cycle progression. Functions as a homodimer, which is essential for chromosome partition. Involved in negative DNA supercoiling in vivo, and by this means organize and compact chromosomes. May achieve or facilitate chromosome segregation by condensation DNA from both sides of a centrally located replisome during cell division. The protein is Chromosome partition protein MukB of Pectobacterium carotovorum subsp. carotovorum (strain PC1).